The chain runs to 955 residues: Kinesin-like protein K39 (955 aa).

Positions 12–392 (RVKVSVRVRP…LRYASRARDI (381 aa)) constitute a Kinesin motor domain. An ATP-binding site is contributed by 122–129 (GQTGSGKT). A coiled-coil region spans residues 426–955 (PAYVSELKKK…EERAAELASQ (530 aa)). 2 disordered regions span residues 682-712 (ELDAAASTSQNARESACERLTSLEQQLRESE) and 725-955 (TAAA…LASQ). 7 consecutive repeat copies span residues 704–742 (LEQQLRESEERAAELASQLEATAAAKSSAEQDRENTRAT), 743–781 (LEQQLRESEARAAELASQLEATAAAKMSAEQDRENTRAT), 782–820 (LEQQLRDSEERAAELASQLESTTAAKMSAEQDRESTRAT), 821–859 (LEQQLRDSEERAAELASQLESTTAAKMSAEQDRESTRAT), 860–898 (LEQQLRESEERAAELASQLESTTAAKMSAEQDRESTRAT), 899–937 (LEQQLRDSEERAAELASQLEATAAAKSSAEQDRENTRAA), and 938–955 (LEQQLRDSEERAAELASQ). The segment at 704–955 (LEQQLRESEE…EERAAELASQ (252 aa)) is 7 X 39 AA approximate tandem repeats. Basic and acidic residues-rich tracts occupy residues 785–794 (QLRDSEERAA), 824–833 (QLRDSEERAA), 863–872 (QLRESEERAA), 902–911 (QLRDSEERAA), and 941–955 (QLRDSEERAAELASQ).

It belongs to the TRAFAC class myosin-kinesin ATPase superfamily. Kinesin family.

The protein localises to the cytoplasm. It is found in the cytoskeleton. The polypeptide is Kinesin-like protein K39 (KIN) (Leishmania chagasi).